The chain runs to 433 residues: MGKNKNYNKNQFKKSKTNNDTTVAQQQQTIEEKPDFKIDGSILEGGGQILRNSVALASLFNKAISIEKIRYNRDQPGLKNQHKAGIDLMSRLFKAHLTGCSVGSCKLYYQPTQKTIQDDGVIEADTKTAGSICLMIQVSLPCLIFAPHSTKMVLGGGTNCDFAPAADYIQNVFLPIATTMGFKCEMSIDKRGFYPKGGGAVTLTTQPLTQPLSPITIVNKGEVNRIVIKSYFTSPRISPLVAERMNNTAKKLIKKDFKKVDVETELIDVSKFSFGDGTFIEIRAYTDQGCIFGATGNGAIGVPAEKVAEDAANSLLKDLQDGGCMDEYLQDQLIIFMALAKGKSQIKTGPISLHTQTSIHITSLMTGAIFTITPLTNNTQSGEETNLITCEGISYFPSDLNNNNNNSNSNTTTTTTTTTISTTTIDNQNSEEK.

Residues 1–10 are compositionally biased toward low complexity; sequence MGKNKNYNKN. Residues 1 to 28 are disordered; that stretch reads MGKNKNYNKNQFKKSKTNNDTTVAQQQQ. Residues 18–28 show a composition bias toward polar residues; that stretch reads NNDTTVAQQQQ. ATP-binding positions include Gln137 and 328–332; that span reads YLQDQ. His354 functions as the Tele-AMP-histidine intermediate in the catalytic mechanism. The interval 400–433 is disordered; sequence LNNNNNNSNSNTTTTTTTTTISTTTIDNQNSEEK. Residues 401–425 are compositionally biased toward low complexity; sequence NNNNNNSNSNTTTTTTTTTISTTTI.

Belongs to the RNA 3'-terminal cyclase family. Type 1 subfamily.

The protein resides in the nucleus. Its subcellular location is the nucleoplasm. It catalyses the reaction a 3'-end 3'-phospho-ribonucleotide-RNA + ATP = a 3'-end 2',3'-cyclophospho-ribonucleotide-RNA + AMP + diphosphate. Functionally, catalyzes the conversion of 3'-phosphate to a 2',3'-cyclic phosphodiester at the end of RNA. The mechanism of action of the enzyme occurs in 3 steps: (A) adenylation of the enzyme by ATP; (B) transfer of adenylate to an RNA-N3'P to produce RNA-N3'PP5'A; (C) and attack of the adjacent 2'-hydroxyl on the 3'-phosphorus in the diester linkage to produce the cyclic end product. The biological role of this enzyme is unknown but it is likely to function in some aspects of cellular RNA processing. The protein is Probable RNA 3'-terminal phosphate cyclase (rtca) of Dictyostelium discoideum (Social amoeba).